The sequence spans 746 residues: NAD(P)H-quinone oxidoreductase subunit 5, chloroplastic (746 aa).

16 helical membrane-spanning segments follow: residues 9-29 (WIIPFIPLPVPILLGVGLLLF), 40-60 (WTFLSIFLLSIVMIFSLYLSI), 89-109 (IDPLTSIMSILITTVGILVLI), 125-145 (FAYMGFFNTSMLGLVTSSNLI), 147-167 (VYFFWELVGMCSYLLIGFWFT), 185-205 (GDFGLLLGILGLYWITGSFEF), 221-241 (VNLLFLTLCAFLLFVGPIAKS), 258-278 (TPISALIHAATMVAAGIFLVA), 280-300 (LLPLFIVIPSIMYIISLIGII), 327-347 (LGYMMLALGMGSYRSALFHLI), 354-374 (ALLFLGSGSIIHSMEAIVGYS), 396-416 (TAFLVGTLSLCGIPPLACFWS), 425-445 (LLFSPIFAIIACSTAGLTAFY), 547-567 (ILFPMLVLLLFTLFIGAIGIP), 608-628 (FSVSIAVFGIFIAYCLYKPFY), and 723-743 (YLFLYLSYVLIFLMILFFFYF).

This sequence belongs to the complex I subunit 5 family. NDH is composed of at least 16 different subunits, 5 of which are encoded in the nucleus.

It is found in the plastid. Its subcellular location is the chloroplast thylakoid membrane. It carries out the reaction a plastoquinone + NADH + (n+1) H(+)(in) = a plastoquinol + NAD(+) + n H(+)(out). The enzyme catalyses a plastoquinone + NADPH + (n+1) H(+)(in) = a plastoquinol + NADP(+) + n H(+)(out). In terms of biological role, NDH shuttles electrons from NAD(P)H:plastoquinone, via FMN and iron-sulfur (Fe-S) centers, to quinones in the photosynthetic chain and possibly in a chloroplast respiratory chain. The immediate electron acceptor for the enzyme in this species is believed to be plastoquinone. Couples the redox reaction to proton translocation, and thus conserves the redox energy in a proton gradient. The protein is NAD(P)H-quinone oxidoreductase subunit 5, chloroplastic (ndhF) of Crucihimalaya wallichii (Rock-cress).